Consider the following 458-residue polypeptide: Protein adenylyltransferase FICD (458 aa).

Over 1-23 the chain is Cytoplasmic; that stretch reads MILMPMASVVAVAEPKWVSVWGR. A helical; Signal-anchor for type II membrane protein transmembrane segment spans residues 24–44; sequence FLWMALLSMALGSLLALLLPL. The Lumenal segment spans residues 45–458; it reads GVVEEHCLAV…GFKETLPVRP (414 aa). Threonine 80 carries the post-translational modification O-AMP-threonine; by autocatalysis. TPR repeat units lie at residues 106 to 139 and 140 to 173; these read AKAA…DPGF and VDAL…SPFH. An O-AMP-threonine; by autocatalysis modification is found at threonine 183. The Inhibitory (S/T)XXXE(G/N) motif motif lies at 230-235; the sequence is TVAIEG. Glutamate 234 lines the ATP pocket. Asparagine 275 carries N-linked (GlcNAc...) asparagine glycosylation. Positions 285–420 constitute a Fido domain; it reads VTMDDMLEIH…VRPFIRFIAK (136 aa). 316–319 lines the ATP pocket; that stretch reads VGHH. Histidine 363 is an active-site residue. ATP contacts are provided by residues 367–374, 399–400, and asparagine 407; these read DGNGRTSR and YY.

It belongs to the fic family. In terms of assembly, homodimer. Interacts with HD. Mg(2+) serves as cofactor. The cofactor is Mn(2+). In terms of processing, auto-AMPylated in vitro.

The protein resides in the endoplasmic reticulum membrane. The catalysed reaction is L-tyrosyl-[protein] + ATP = O-(5'-adenylyl)-L-tyrosyl-[protein] + diphosphate. It carries out the reaction 3-O-(5'-adenylyl)-L-threonyl-[protein] + H2O = L-threonyl-[protein] + AMP + H(+). It catalyses the reaction L-threonyl-[protein] + ATP = 3-O-(5'-adenylyl)-L-threonyl-[protein] + diphosphate. Its activity is regulated as follows. The side chain of Glu-234 determines which of the two opposing activities (AMPylase or de-AMPylase) will take place. In response to endoplasmic reticulum stress, mediates de-AMPylase activity. Adenylyltransferase activity is inhibited by the inhibitory helix present at the N-terminus: Glu-234 binds ATP and competes with ATP-binding at Arg-374, thereby preventing adenylyltransferase activity. In unstressed cells, disengagement of Glu-234 promotes adenylyltransferase activity. Activation dissociates ATP-binding from Glu-234, allowing ordered binding of the entire ATP moiety with the alpha-phosphate in an orientation that is productive for accepting an incoming target hydroxyl side chain. Its function is as follows. Protein that can both mediate the addition of adenosine 5'-monophosphate (AMP) to specific residues of target proteins (AMPylation), and the removal of the same modification from target proteins (de-AMPylation), depending on the context. The side chain of Glu-231 determines which of the two opposing activities (AMPylase or de-AMPylase) will take place. Acts as a key regulator of the ERN1/IRE1-mediated unfolded protein response (UPR) by mediating AMPylation or de-AMPylation of HSPA5/BiP. In unstressed cells, acts as an adenylyltransferase by mediating AMPylation of HSPA5/BiP at 'Thr-518', thereby inactivating it. In response to endoplasmic reticulum stress, acts as a phosphodiesterase by mediating removal of ATP (de-AMPylation) from HSPA5/BiP at 'Thr-518', leading to restore HSPA5/BiP activity. Although it is able to AMPylate RhoA, Rac and Cdc42 Rho GTPases in vitro, Rho GTPases do not constitute physiological substrates. The polypeptide is Protein adenylyltransferase FICD (Mus musculus (Mouse)).